The chain runs to 585 residues: Protein NRT1/ PTR FAMILY 8.3 (585 aa).

An N-acetylglycine modification is found at G2. The chain crosses the membrane as a helical span at residues 91–111 (WQGTCYLTPLIGAVLADAYWG). T115 bears the Phosphothreonine mark. 10 consecutive transmembrane segments (helical) span residues 116-136 (IACF…SASV), 154-174 (PAQY…TGGI), 200-220 (FFNW…SLLV), 228-248 (WGLG…SFFF), 351-371 (FPIW…STMF), 387-407 (LPPA…VPLY), 431-451 (MGIG…VEII), 472-492 (VLWQ…YFIG), 511-531 (ALAL…LTLV), and 556-576 (FFWL…FSAA).

It belongs to the major facilitator superfamily. Proton-dependent oligopeptide transporter (POT/PTR) (TC 2.A.17) family. Highly expressed in young leaves, roots and germinating seeds, intermediately in stems, flowers and mature leaves and at low level in siliques.

It is found in the vacuole membrane. Its activity is regulated as follows. Inhibited by leucyl-ethionine. Peptide transporter. Mediates the transport of di- and tripeptides. High affinity, low capacity transporter. Can also transport histidine. The sequence is that of Protein NRT1/ PTR FAMILY 8.3 (NPF8.3) from Arabidopsis thaliana (Mouse-ear cress).